A 191-amino-acid polypeptide reads, in one-letter code: Fe/S biogenesis protein NfuA (191 aa).

Cysteine 149 and cysteine 152 together coordinate [4Fe-4S] cluster.

The protein belongs to the NfuA family. As to quaternary structure, homodimer. [4Fe-4S] cluster is required as a cofactor.

Its function is as follows. Involved in iron-sulfur cluster biogenesis. Binds a 4Fe-4S cluster, can transfer this cluster to apoproteins, and thereby intervenes in the maturation of Fe/S proteins. Could also act as a scaffold/chaperone for damaged Fe/S proteins. The sequence is that of Fe/S biogenesis protein NfuA from Salmonella typhi.